A 137-amino-acid polypeptide reads, in one-letter code: Small ribosomal subunit protein uS11 (137 aa).

Disordered regions lie at residues 1–31 and 117–137; these read MPPKSRGTGPKKTQKARRRDKKNVPHGAAHI and TISDVTPQPHNGCRPPKRRRV. Basic residues predominate over residues 12-21; it reads KTQKARRRDK.

This sequence belongs to the universal ribosomal protein uS11 family. In terms of assembly, part of the 30S ribosomal subunit. Interacts with proteins S7 and S18. Binds to IF-3.

Its function is as follows. Located on the platform of the 30S subunit, it bridges several disparate RNA helices of the 16S rRNA. Forms part of the Shine-Dalgarno cleft in the 70S ribosome. The protein is Small ribosomal subunit protein uS11 of Rhodococcus jostii (strain RHA1).